Consider the following 438-residue polypeptide: MPRRSPADPAAALAPRRTTLPGGLRVVTEFLPAVHSASVGVWVGVGSRDEGATVAGAAHFLEHLLFKSTPTRSAVDIAQAMDAVGGELNAFTAKEHTCYYAHVLGSDLPLAVDLVADVVLNGRCAADDVEVERDVVLEEIAMRDDDPEDALADMFLAALFGDHPVGRPVIGSAQSVSVMTRAQLQSFHLRRYTPERMVVAAAGNVDHDGLVALVREHFGSRLVRGRRPVAPRKGTGRVNGSPRLTLVSRDAEQTHVSLGIRTPGRGWEHRWALSVLHTALGGGLSSRLFQEVRETRGLAYSVYSALDLFADSGALSVYAACLPERFADVMRVTADVLESVARDGITEAECGIAKGSLRGGLVLGLEDSSSRMSRLGRSELNYGKHRSIEHTLRQIEQVTVEEVNAVARHLLSRRYGAAVLGPHGSKRSLPQQLRAMVG.

A Zn(2+)-binding site is contributed by H59. The Proton acceptor role is filled by E62. Positions 63 and 139 each coordinate Zn(2+).

This sequence belongs to the peptidase M16 family. Zn(2+) serves as cofactor.

This is an uncharacterized protein from Mycobacterium bovis (strain ATCC BAA-935 / AF2122/97).